Here is a 372-residue protein sequence, read N- to C-terminus: Tubby-like F-box protein 9 (372 aa).

Positions 1–51 (MALWRCSSSWLSSVSRSSGGVGGGESKVSPEIAPVSGGEGEGEEEEGEEER) are disordered. Over residues 7–18 (SSSWLSSVSRSS) the composition is skewed to low complexity. A compositionally biased stretch (acidic residues) spans 40–49 (GEGEEEEGEE). The F-box domain maps to 50–105 (ERWSRLLPELLTEIMRRVDAGAERWPPRRDVVACACVCRRWRDAAVSVVRPPLECG).

The protein belongs to the TUB family. As to expression, ubiquitous.

The chain is Tubby-like F-box protein 9 (TULP9) from Oryza sativa subsp. japonica (Rice).